Reading from the N-terminus, the 177-residue chain is UPF0114 protein jhp_0175 (177 aa).

A run of 3 helical transmembrane segments spans residues 15-35 (WLLA…GYVF), 54-74 (LVLS…VLMV), and 145-165 (PIFW…LTAV).

The protein belongs to the UPF0114 family.

Its subcellular location is the cell membrane. The protein is UPF0114 protein jhp_0175 of Helicobacter pylori (strain J99 / ATCC 700824) (Campylobacter pylori J99).